The primary structure comprises 135 residues: ATP synthase epsilon chain (135 aa).

Belongs to the ATPase epsilon chain family. As to quaternary structure, F-type ATPases have 2 components, CF(1) - the catalytic core - and CF(0) - the membrane proton channel. CF(1) has five subunits: alpha(3), beta(3), gamma(1), delta(1), epsilon(1). CF(0) has three main subunits: a, b and c.

Its subcellular location is the cell inner membrane. Its function is as follows. Produces ATP from ADP in the presence of a proton gradient across the membrane. The protein is ATP synthase epsilon chain of Rhodopseudomonas palustris (strain BisA53).